A 622-amino-acid chain; its full sequence is MHPEVSEQQADGATEPSLEESAGDHSGAGPGVRKEEINETKETCVGPSTTSCQSQKQQSGDSRLDCRSGYARNDRDDRGPRMTKEFLQKLCKQHKLYITPALNDTLYLHFKGFDRIENLEEYTGLRCLWLECNGIQRIENLQAQSELRCLFLQVNLLHKIENLEPLQKLDALNLSNNYIKTIENLSCLPVLNTLQMAHNRLETVADIQHLRECLRLCVLDLSHNMLSDPEILSVLESMPCLRVLNLMGNPVTKHIPNYRRTVTVRLKQLTYLDDRPVFPKDRACAEAWARGGYAAEKEERLQWESREHKKITDSLEALAMIKRRAEERKKARDKGETPLPDSEESSSTSPEAQDKPPLGETQQKIEVLVEESFKAKDELFPEKPGGEEELAVVADRTMEEPDLPGSLAQSQTPLVATAEESTSSVAATDGTGIEDTEAIALENKERLFIDDLPDLEDVDGMDISMEDQTKETGIPKIQVISSLSDDSDPELNDSPLPMLEHTPTGSTGVLSNIFAVCKDSSKAARVPLTDIYEPRATTAPETQGQVFSTTPPRPLIQELEEDGRGENESKQSLPAQSSEDGDSQLPEATLLGDRAENEAQSSLDLGKPSPRASLEDIEFGLD.

Positions 1–11 (MHPEVSEQQAD) are enriched in polar residues. A disordered region spans residues 1-80 (MHPEVSEQQA…ARNDRDDRGP (80 aa)). Positions 32–42 (VRKEEINETKE) are enriched in basic and acidic residues. The span at 48 to 59 (STTSCQSQKQQS) shows a compositional bias: low complexity. Positions 62–80 (SRLDCRSGYARNDRDDRGP) are enriched in basic and acidic residues. LRR repeat units lie at residues 101–123 (ALNDTLYLHFKGFDRIENLEEYT), 124–145 (GLRCLWLECNGIQRIENLQAQS), 146–167 (ELRCLFLQVNLLHKIENLEPLQ), 168–189 (KLDALNLSNNYIKTIENLSCLP), 190–211 (VLNTLQMAHNRLETVADIQHLR), and 215–236 (RLCVLDLSHNMLSDPEILSVLE). An LRRCT domain is found at 249-288 (NPVTKHIPNYRRTVTVRLKQLTYLDDRPVFPKDRACAEAW). Basic and acidic residues predominate over residues 326 to 336 (EERKKARDKGE). 2 disordered regions span residues 326-360 (EERKKARDKGETPLPDSEESSSTSPEAQDKPPLGE) and 399-431 (EEPDLPGSLAQSQTPLVATAEESTSSVAATDGT). 2 stretches are compositionally biased toward low complexity: residues 337–351 (TPLPDSEESSSTSPE) and 415–428 (VATAEESTSSVAAT). Phosphoserine is present on serine 349. Phosphoserine is present on residues serine 464 and serine 487. Disordered stretches follow at residues 480–503 (ISSLSDDSDPELNDSPLPMLEHTP) and 525–622 (RVPL…FGLD). The segment covering 539 to 550 (APETQGQVFSTT) has biased composition (polar residues).

This sequence belongs to the DNAAF1 family.

It is found in the cell projection. The protein localises to the cilium. In terms of biological role, cilium-specific protein required for the stability of the ciliary architecture. Plays a role in cytoplasmic preassembly of dynein arms. Involved in regulation of microtubule-based cilia and actin-based brush border microvilli. The polypeptide is Dynein axonemal assembly factor 1 (Dnaaf1) (Peromyscus polionotus (Oldfield mouse)).